We begin with the raw amino-acid sequence, 232 residues long: Pirin-like protein CC_1473 (232 aa).

Belongs to the pirin family.

The sequence is that of Pirin-like protein CC_1473 from Caulobacter vibrioides (strain ATCC 19089 / CIP 103742 / CB 15) (Caulobacter crescentus).